Reading from the N-terminus, the 164-residue chain is UPF0304 protein PM1500 (164 aa).

It belongs to the UPF0304 family.

The protein is UPF0304 protein PM1500 of Pasteurella multocida (strain Pm70).